The following is a 77-amino-acid chain: U8-lycotoxin-Ls1m (77 aa).

The N-terminal stretch at 1–20 is a signal peptide; sequence MKLMIFTGLFLFAIVSLIEA. A propeptide spanning residues 21–26 is cleaved from the precursor; it reads QAENEK.

Belongs to the neurotoxin 19 (CSTX) family. 08 (U8-Lctx) subfamily. Contains 4 disulfide bonds. Expressed by the venom gland.

It localises to the secreted. This chain is U8-lycotoxin-Ls1m, found in Lycosa singoriensis (Wolf spider).